A 218-amino-acid chain; its full sequence is N-alpha-acetyltransferase 11 (218 aa).

The interaction with NAA15 stretch occupies residues 1–58; sequence MNIRNARPDDLMNMQHCNLLCLPENYQMKYYFYHGLSWPQLSYIAEDEDGKIVGYVLA. The N-acetyltransferase domain maps to 1–152; the sequence is MNIRNARPDD…DAYAMKRDLS (152 aa). The tract at residues 175–218 is disordered; the sequence is EETQGGTLPDAGEACLPKNPTSKDSGSSDSTDVQDSSEDLDSIS. Low complexity predominate over residues 196–205; the sequence is SKDSGSSDST. The span at 209–218 shows a compositional bias: acidic residues; sequence DSSEDLDSIS.

Belongs to the acetyltransferase family. ARD1 subfamily. As to quaternary structure, component of the N-terminal acetyltransferase A (NatA) complex composed of NAA11 and NAA15. Interacts with HIF1A.

The protein localises to the cytoplasm. Its subcellular location is the nucleus. The catalysed reaction is N-terminal glycyl-[protein] + acetyl-CoA = N-terminal N(alpha)-acetylglycyl-[protein] + CoA + H(+). It carries out the reaction N-terminal L-alanyl-[protein] + acetyl-CoA = N-terminal N(alpha)-acetyl-L-alanyl-[protein] + CoA + H(+). It catalyses the reaction N-terminal L-seryl-[protein] + acetyl-CoA = N-terminal N(alpha)-acetyl-L-seryl-[protein] + CoA + H(+). The enzyme catalyses N-terminal L-valyl-[protein] + acetyl-CoA = N-terminal N(alpha)-acetyl-L-valyl-[protein] + CoA + H(+). The catalysed reaction is N-terminal L-cysteinyl-[protein] + acetyl-CoA = N-terminal N(alpha)-acetyl-L-cysteinyl-[protein] + CoA + H(+). It carries out the reaction N-terminal L-threonyl-[protein] + acetyl-CoA = N-terminal N(alpha)-acetyl-L-threonyl-[protein] + CoA + H(+). Its function is as follows. Displays alpha (N-terminal) acetyltransferase activity. Proposed alternative catalytic subunit of the N-terminal acetyltransferase A (NatA) complex. The chain is N-alpha-acetyltransferase 11 (Naa11) from Mus musculus (Mouse).